We begin with the raw amino-acid sequence, 342 residues long: GTPase Obg (342 aa).

One can recognise an Obg domain in the interval 1–159 (MQFIDQAQIE…KLLRLELKLL (159 aa)). Positions 160-330 (AEVGIIGLPN…MLQEVWGILD (171 aa)) constitute an OBG-type G domain. GTP is bound by residues 166–173 (GLPNAGKS), 191–195 (FTTLI), 213–216 (DIPG), 280–283 (NKID), and 311–313 (SAV). Residues Ser-173 and Thr-193 each coordinate Mg(2+).

It belongs to the TRAFAC class OBG-HflX-like GTPase superfamily. OBG GTPase family. In terms of assembly, monomer. The cofactor is Mg(2+).

The protein localises to the cytoplasm. Functionally, an essential GTPase which binds GTP, GDP and possibly (p)ppGpp with moderate affinity, with high nucleotide exchange rates and a fairly low GTP hydrolysis rate. Plays a role in control of the cell cycle, stress response, ribosome biogenesis and in those bacteria that undergo differentiation, in morphogenesis control. The chain is GTPase Obg from Trichormus variabilis (strain ATCC 29413 / PCC 7937) (Anabaena variabilis).